The primary structure comprises 375 residues: Succinyl-diaminopimelate desuccinylase (375 aa).

A Zn(2+)-binding site is contributed by His-66. The active site involves Asp-68. Asp-99 is a binding site for Zn(2+). Glu-133 functions as the Proton acceptor in the catalytic mechanism. Zn(2+) is bound by residues Glu-134, Glu-162, and His-348.

It belongs to the peptidase M20A family. DapE subfamily. Homodimer. Zn(2+) is required as a cofactor. It depends on Co(2+) as a cofactor.

It catalyses the reaction N-succinyl-(2S,6S)-2,6-diaminopimelate + H2O = (2S,6S)-2,6-diaminopimelate + succinate. Its pathway is amino-acid biosynthesis; L-lysine biosynthesis via DAP pathway; LL-2,6-diaminopimelate from (S)-tetrahydrodipicolinate (succinylase route): step 3/3. Its function is as follows. Catalyzes the hydrolysis of N-succinyl-L,L-diaminopimelic acid (SDAP), forming succinate and LL-2,6-diaminopimelate (DAP), an intermediate involved in the bacterial biosynthesis of lysine and meso-diaminopimelic acid, an essential component of bacterial cell walls. The sequence is that of Succinyl-diaminopimelate desuccinylase from Escherichia coli O17:K52:H18 (strain UMN026 / ExPEC).